The sequence spans 431 residues: Polyprenol-phosphate-mannose-dependent alpha-(1-2)-phosphatidylinositol pentamannoside mannosyltransferase (431 aa).

10 helical membrane-spanning segments follow: residues 43–63 (AAVL…YLAP), 108–128 (FAAV…ALLW), 148–168 (GGTA…AIWI), 175–195 (FDYG…VYTP), 202–222 (LLVG…VYLV), 229–249 (AAAF…LVVG), 290–310 (GFGP…ILAW), 332–352 (LSPI…IWLI), 364–384 (ILGW…LSFA), and 397–417 (LAWA…WIAA).

Belongs to the glycosyltransferase 87 family.

It localises to the cell membrane. It participates in phospholipid metabolism; phosphatidylinositol metabolism. Functionally, catalyzes the alpha-1,2 addition of a mannose residue from polyprenol-phosphate-mannose (PPM) to a monoacyl phosphatidylinositol tetramannoside (AcPIM4) to generate a monoacyl phosphatidylinositol pentamannoside (AcPIM5). The protein is Polyprenol-phosphate-mannose-dependent alpha-(1-2)-phosphatidylinositol pentamannoside mannosyltransferase (pimE) of Mycobacterium tuberculosis (strain CDC 1551 / Oshkosh).